Reading from the N-terminus, the 1368-residue chain is DNA-directed RNA polymerase subunit beta (1368 aa).

This sequence belongs to the RNA polymerase beta chain family. The RNAP catalytic core consists of 2 alpha, 1 beta, 1 beta' and 1 omega subunit. When a sigma factor is associated with the core the holoenzyme is formed, which can initiate transcription.

The catalysed reaction is RNA(n) + a ribonucleoside 5'-triphosphate = RNA(n+1) + diphosphate. In terms of biological role, DNA-dependent RNA polymerase catalyzes the transcription of DNA into RNA using the four ribonucleoside triphosphates as substrates. The sequence is that of DNA-directed RNA polymerase subunit beta from Paraburkholderia phytofirmans (strain DSM 17436 / LMG 22146 / PsJN) (Burkholderia phytofirmans).